The sequence spans 400 residues: MENPIKPVATRSIGIAVVLLVVGIVIGFAVGHYTVATAPSKPAINTFAAGSLKYALGNDFNPQYTNLTGVRVGMTFSGSISGAREVQEGKNYSVFISASAPILYQDLMNDTHYASWQIIFSANEMAITWTNPKYSILPSWPYWFENITENSTIVAASNASLDPSGFQAIETMKLAGLLYTGWDNSSILVGNEPVSYYVRLAFDDNFAMYMNYNKAYNDWFHGQFGYPVNDSLALYHQIFISKYLNGTTKLTTVEIGLDGYLTAGTADYALTYVSQAINQGLSYYENSTGGNGLPAWINLGSVNKTIDDFYEQINESGPAWDNVGNLPGAPIFYSITVISNYTNPYAIQYVYDLITGLGQHYLSMSKFDPLAQPFYVGDVPAQLKPLVVAPPSYLPVSSYD.

An N-terminal signal peptide occupies residues 1–31; it reads MENPIKPVATRSIGIAVVLLVVGIVIGFAVG.

Belongs to the bacterial solute-binding protein 1 family. WtpA subfamily.

This is an uncharacterized protein from Thermoplasma acidophilum (strain ATCC 25905 / DSM 1728 / JCM 9062 / NBRC 15155 / AMRC-C165).